Consider the following 193-residue polypeptide: Holliday junction branch migration complex subunit RuvA (193 aa).

The interval 1–64 is domain I; the sequence is MIGRIAGTLI…EDAHLLYGFG (64 aa). The segment at 65–143 is domain II; that stretch reads TASERNTFRE…AELGHVPGTP (79 aa). A flexible linker region spans residues 144–151; that stretch reads AVPDSAVD. The tract at residues 151-193 is domain III; sequence DVLNALLALGYSEKEAAAAIKQVPAGTGVSDGIKLALKALSKA.

This sequence belongs to the RuvA family. In terms of assembly, homotetramer. Forms an RuvA(8)-RuvB(12)-Holliday junction (HJ) complex. HJ DNA is sandwiched between 2 RuvA tetramers; dsDNA enters through RuvA and exits via RuvB. An RuvB hexamer assembles on each DNA strand where it exits the tetramer. Each RuvB hexamer is contacted by two RuvA subunits (via domain III) on 2 adjacent RuvB subunits; this complex drives branch migration. In the full resolvosome a probable DNA-RuvA(4)-RuvB(12)-RuvC(2) complex forms which resolves the HJ.

The protein localises to the cytoplasm. Functionally, the RuvA-RuvB-RuvC complex processes Holliday junction (HJ) DNA during genetic recombination and DNA repair, while the RuvA-RuvB complex plays an important role in the rescue of blocked DNA replication forks via replication fork reversal (RFR). RuvA specifically binds to HJ cruciform DNA, conferring on it an open structure. The RuvB hexamer acts as an ATP-dependent pump, pulling dsDNA into and through the RuvAB complex. HJ branch migration allows RuvC to scan DNA until it finds its consensus sequence, where it cleaves and resolves the cruciform DNA. The chain is Holliday junction branch migration complex subunit RuvA from Cupriavidus necator (strain ATCC 17699 / DSM 428 / KCTC 22496 / NCIMB 10442 / H16 / Stanier 337) (Ralstonia eutropha).